Here is a 202-residue protein sequence, read N- to C-terminus: MTSSRSTELIETQEDVVRKLSQKTPVSNFSALPLPNGPQAPTQLQPFQFEFPLPAGQEGSVTLPLATFPKMATFLSRHRRAQLTQLHAVVSPSAVSIGHPLTVQLIWVPASSTTTSSQILGTYGGQQISVGGQVTNSSPAKVSANLLMMNPHIKDSTSYTDTPKLLVYSTPAVPDDKLTTSSASIIVFGEVLLSSPQLNPSA.

Belongs to the tymoviruses capsid protein family.

The protein localises to the virion. Functionally, self-assembles to form a T=3 icosahedral capsid composed of 180 copies of the capsid protein. The capsid encapsulates the single-stranded RNA genome. In Erysimum (ELV), this protein is Capsid protein.